Here is a 180-residue protein sequence, read N- to C-terminus: Dual-action ribosomal maturation protein DarP (180 aa).

Belongs to the DarP family.

It localises to the cytoplasm. In terms of biological role, member of a network of 50S ribosomal subunit biogenesis factors which assembles along the 30S-50S interface, preventing incorrect 23S rRNA structures from forming. Promotes peptidyl transferase center (PTC) maturation. The sequence is that of Dual-action ribosomal maturation protein DarP from Chromobacterium violaceum (strain ATCC 12472 / DSM 30191 / JCM 1249 / CCUG 213 / NBRC 12614 / NCIMB 9131 / NCTC 9757 / MK).